Here is a 405-residue protein sequence, read N- to C-terminus: Mevalonate 3,5-bisphosphate decarboxylase (405 aa).

The protein belongs to the mevalonate 3,5-bisphosphate decarboxylase family. As to quaternary structure, homodimer.

It carries out the reaction (R)-3,5-bisphosphomevalonate + H(+) = isopentenyl phosphate + phosphate + CO2. It participates in isoprenoid biosynthesis; isopentenyl diphosphate biosynthesis via mevalonate pathway. In terms of biological role, catalyzes the ATP-independent decarboxylation of (R)-mevalonate 3,5-bisphosphate to isopentenyl phosphate. Functions in an alternative mevalonate pathway, only present in extreme acidophiles of the Thermoplasmatales order, which passes through mevalonate 3-phosphate rather than mevalonate 5-phosphate. The polypeptide is Mevalonate 3,5-bisphosphate decarboxylase (Thermoplasma acidophilum (strain ATCC 25905 / DSM 1728 / JCM 9062 / NBRC 15155 / AMRC-C165)).